The primary structure comprises 192 residues: Inner membrane protein YohD (192 aa).

The Periplasmic portion of the chain corresponds to 1-40 (MDLNTLISQYGYAALVIGSLAEGETVTLLGGVAAHQGLLK). A helical transmembrane segment spans residues 41–61 (FPLVVLSVALGGMIGDQVLYL). The Cytoplasmic segment spans residues 62–121 (CGRRFGGKLLRRFSKHQDKIERAQKLIQRHPYLFVIGTRFMYGFRVIGPTLIGASQLPPK). Residues 122 to 142 (IFLPLNILGAFAWALIFTTIG) traverse the membrane as a helical segment. The Periplasmic segment spans residues 143–159 (YAGGQVIAPWLHNLDQH). A helical membrane pass occupies residues 160–180 (LKHWVWLILVVVLVVGVRWWL). Topologically, residues 181-192 (KRRGKKKPDHQA) are cytoplasmic.

This sequence belongs to the DedA family.

It is found in the cell inner membrane. The protein is Inner membrane protein YohD (yohD) of Escherichia coli (strain K12).